The primary structure comprises 371 residues: Bifunctional enzyme IspD/IspF (371 aa).

Residues 1-210 are 2-C-methyl-D-erythritol 4-phosphate cytidylyltransferase; the sequence is MSEISLIMLA…LDLPTPSFEI (210 aa). A 2-C-methyl-D-erythritol 2,4-cyclodiphosphate synthase region spans residues 211 to 371; the sequence is FTGNGFDVHE…NLKYFDWTRL (161 aa). A divalent metal cation contacts are provided by aspartate 217 and histidine 219. Residues 217-219 and 243-244 each bind 4-CDP-2-C-methyl-D-erythritol 2-phosphate; these read DVH and HS. Histidine 251 serves as a coordination point for a divalent metal cation. 4-CDP-2-C-methyl-D-erythritol 2-phosphate-binding positions include 265-267, 270-274, 341-344, phenylalanine 348, and arginine 351; these read DIG, YPDTD, and TTTE.

The protein in the N-terminal section; belongs to the IspD/TarI cytidylyltransferase family. IspD subfamily. This sequence in the C-terminal section; belongs to the IspF family. A divalent metal cation is required as a cofactor.

It catalyses the reaction 2-C-methyl-D-erythritol 4-phosphate + CTP + H(+) = 4-CDP-2-C-methyl-D-erythritol + diphosphate. It carries out the reaction 4-CDP-2-C-methyl-D-erythritol 2-phosphate = 2-C-methyl-D-erythritol 2,4-cyclic diphosphate + CMP. Its pathway is isoprenoid biosynthesis; isopentenyl diphosphate biosynthesis via DXP pathway; isopentenyl diphosphate from 1-deoxy-D-xylulose 5-phosphate: step 2/6. It participates in isoprenoid biosynthesis; isopentenyl diphosphate biosynthesis via DXP pathway; isopentenyl diphosphate from 1-deoxy-D-xylulose 5-phosphate: step 4/6. In terms of biological role, bifunctional enzyme that catalyzes the formation of 4-diphosphocytidyl-2-C-methyl-D-erythritol from CTP and 2-C-methyl-D-erythritol 4-phosphate (MEP) (IspD), and catalyzes the conversion of 4-diphosphocytidyl-2-C-methyl-D-erythritol 2-phosphate (CDP-ME2P) to 2-C-methyl-D-erythritol 2,4-cyclodiphosphate (ME-CPP) with a corresponding release of cytidine 5-monophosphate (CMP) (IspF). The polypeptide is Bifunctional enzyme IspD/IspF (Campylobacter jejuni subsp. jejuni serotype O:6 (strain 81116 / NCTC 11828)).